Reading from the N-terminus, the 232-residue chain is Octanoyltransferase (232 aa).

The BPL/LPL catalytic domain maps to Leu43–Ile231. Substrate is bound by residues Arg88 to His95, Ala160 to Gly162, and Gly173 to Ala175. Cys191 serves as the catalytic Acyl-thioester intermediate.

Belongs to the LipB family.

It localises to the cytoplasm. It carries out the reaction octanoyl-[ACP] + L-lysyl-[protein] = N(6)-octanoyl-L-lysyl-[protein] + holo-[ACP] + H(+). It participates in protein modification; protein lipoylation via endogenous pathway; protein N(6)-(lipoyl)lysine from octanoyl-[acyl-carrier-protein]: step 1/2. Catalyzes the transfer of endogenously produced octanoic acid from octanoyl-acyl-carrier-protein onto the lipoyl domains of lipoate-dependent enzymes. Lipoyl-ACP can also act as a substrate although octanoyl-ACP is likely to be the physiological substrate. The protein is Octanoyltransferase of Flavobacterium johnsoniae (strain ATCC 17061 / DSM 2064 / JCM 8514 / BCRC 14874 / CCUG 350202 / NBRC 14942 / NCIMB 11054 / UW101) (Cytophaga johnsonae).